We begin with the raw amino-acid sequence, 86 residues long: MNLQTLLSMISNTSSWSISTAIIMVICNLLCIGLGRYAIQVRGLGPSIPALGLKGFGLPELLATTSLGHIIGAGAIIGLNSIKIIN.

2 helical membrane passes run Ser15–Gly35 and Gly57–Ile77.

Belongs to the PsaG/PsaK family.

The protein localises to the plastid. It is found in the chloroplast thylakoid membrane. This Gracilaria tenuistipitata var. liui (Red alga) protein is Photosystem I reaction center subunit PsaK.